Here is a 96-residue protein sequence, read N- to C-terminus: Mitochondrial import inner membrane translocase subunit Tim13-A (96 aa).

Positions Cys47–Cys70 match the Twin CX3C motif motif. 2 disulfides stabilise this stretch: Cys47–Cys70 and Cys51–Cys66.

This sequence belongs to the small Tim family. In terms of assembly, heterohexamer; composed of 3 copies of TIMM8 (TIMM8A or TIMM8B) and 3 copies of TIMM13, named soluble 70 kDa complex. Associates with the TIM22 complex, whose core is composed of TIMM22.

Its subcellular location is the mitochondrion inner membrane. Mitochondrial intermembrane chaperone that participates in the import and insertion of some multi-pass transmembrane proteins into the mitochondrial inner membrane. Also required for the transfer of beta-barrel precursors from the TOM complex to the sorting and assembly machinery (SAM complex) of the outer membrane. Acts as a chaperone-like protein that protects the hydrophobic precursors from aggregation and guide them through the mitochondrial intermembrane space. The TIMM8-TIMM13 complex mediates the import of some proteins while the predominant TIMM9-TIMM10 70 kDa complex mediates the import of much more proteins. The chain is Mitochondrial import inner membrane translocase subunit Tim13-A (timm13-a) from Xenopus laevis (African clawed frog).